Reading from the N-terminus, the 67-residue chain is Beta-defensin 123 (67 aa).

A signal peptide spans methionine 1–glycine 20. 3 disulfides stabilise this stretch: cysteine 25-cysteine 52, cysteine 32-cysteine 46, and cysteine 36-cysteine 53.

Belongs to the beta-defensin family.

It localises to the secreted. In terms of biological role, has antibacterial activity. The polypeptide is Beta-defensin 123 (DEFB123) (Pongo pygmaeus (Bornean orangutan)).